We begin with the raw amino-acid sequence, 148 residues long: Small ribosomal subunit protein uS9 (148 aa).

The protein belongs to the universal ribosomal protein uS9 family.

The protein is Small ribosomal subunit protein uS9 (RpS16) of Aedes aegypti (Yellowfever mosquito).